The chain runs to 344 residues: Photosystem II protein D1 (344 aa).

Thr-2 bears the N-acetylthreonine mark. The residue at position 2 (Thr-2) is a Phosphothreonine. A run of 3 helical transmembrane segments spans residues 29–46 (YIGWFGCLMIPTLLTATS), 118–133 (HFFLGICAYMGREWEL), and 142–156 (WIAVAYSAPVAAATA). His-118 contacts chlorophyll a. A pheophytin a-binding site is contributed by Tyr-126. Residues Asp-170 and Glu-189 each coordinate [CaMn4O5] cluster. Residues 197–218 (FHMLGVAGVFGGSLFSAMHGSL) traverse the membrane as a helical segment. His-198 is a chlorophyll a binding site. A quinone-binding positions include His-215 and 264–265 (SF). His-215 serves as a coordination point for Fe cation. His-272 contributes to the Fe cation binding site. Residues 274–288 (FLAAWPVIGIWFTAL) form a helical membrane-spanning segment. Residues His-332, Glu-333, Asp-342, and Ala-344 each contribute to the [CaMn4O5] cluster site.

Belongs to the reaction center PufL/M/PsbA/D family. In terms of assembly, PSII is composed of 1 copy each of membrane proteins PsbA, PsbB, PsbC, PsbD, PsbE, PsbF, PsbH, PsbI, PsbJ, PsbK, PsbL, PsbM, PsbT, PsbX, PsbY, PsbZ, Psb30/Ycf12, at least 3 peripheral proteins of the oxygen-evolving complex and a large number of cofactors. It forms dimeric complexes. The D1/D2 heterodimer binds P680, chlorophylls that are the primary electron donor of PSII, and subsequent electron acceptors. It shares a non-heme iron and each subunit binds pheophytin, quinone, additional chlorophylls, carotenoids and lipids. D1 provides most of the ligands for the Mn4-Ca-O5 cluster of the oxygen-evolving complex (OEC). There is also a Cl(-1) ion associated with D1 and D2, which is required for oxygen evolution. The PSII complex binds additional chlorophylls, carotenoids and specific lipids. is required as a cofactor. Post-translationally, tyr-161 forms a radical intermediate that is referred to as redox-active TyrZ, YZ or Y-Z.

It is found in the plastid. The protein localises to the chloroplast thylakoid membrane. The catalysed reaction is 2 a plastoquinone + 4 hnu + 2 H2O = 2 a plastoquinol + O2. Functionally, photosystem II (PSII) is a light-driven water:plastoquinone oxidoreductase that uses light energy to abstract electrons from H(2)O, generating O(2) and a proton gradient subsequently used for ATP formation. It consists of a core antenna complex that captures photons, and an electron transfer chain that converts photonic excitation into a charge separation. The D1/D2 (PsbA/PsbD) reaction center heterodimer binds P680, the primary electron donor of PSII as well as several subsequent electron acceptors. The chain is Photosystem II protein D1 from Pleurastrum terricola (Filamentous green alga).